Consider the following 417-residue polypeptide: DNA primase small subunit (417 aa).

An N-acetylmethionine modification is found at Met1. Catalysis depends on residues Glu44, Asp109, and Asp111. Mg(2+) is bound by residues Asp109 and Asp111. Mn(2+) contacts are provided by Asp109 and Asp111. 109–111 (DID) serves as a coordination point for a ribonucleoside 5'-triphosphate. The Zn(2+) site is built by Cys121, Cys122, Cys128, and Cys131. A Zinc knuckle motif motif is present at residues 121–131 (CCSSADICSKC). An a ribonucleoside 5'-triphosphate-binding site is contributed by 160–166 (SGRRGVH). Residue Asp305 participates in Mg(2+) binding. Asp305 is a binding site for Mn(2+). Residues 314–317 (HLLK) and His323 contribute to the a ribonucleoside 5'-triphosphate site.

It belongs to the eukaryotic-type primase small subunit family. In terms of assembly, heterodimer of a catalytic subunit PRIM1 and a regulatory subunit PRIM2, also known as the DNA primase complex. Interacts with PRIM2/p58 (via C-terminus). Component of the alpha DNA polymerase complex (also known as the alpha DNA polymerase-primase complex) consisting of four subunits: the catalytic subunit POLA1, the regulatory subunit POLA2, and the primase complex subunits PRIM1 and PRIM2 respectively. Within the complex, POLA1 directly interacts with PRIM2. It depends on Mg(2+) as a cofactor. Mn(2+) is required as a cofactor.

The catalysed reaction is ssDNA + n NTP = ssDNA/pppN(pN)n-1 hybrid + (n-1) diphosphate.. With respect to regulation, the presence of the regulatory subunit PRIM2/p58 accelerates the kinetics of initiation and primer extension. Functionally, catalytic subunit of the DNA primase complex and component of the DNA polymerase alpha complex (also known as the alpha DNA polymerase-primase complex) which play an essential role in the initiation of DNA synthesis. During the S phase of the cell cycle, the DNA polymerase alpha complex (composed of a catalytic subunit POLA1, an accessory subunit POLA2 and two primase subunits, the catalytic subunit PRIM1 and the regulatory subunit PRIM2) is recruited to DNA at the replicative forks via direct interactions with MCM10 and WDHD1. The primase subunit of the polymerase alpha complex initiates DNA synthesis by oligomerising short RNA primers on both leading and lagging strands. These primers are initially extended by the polymerase alpha catalytic subunit and subsequently transferred to polymerase delta and polymerase epsilon for processive synthesis on the lagging and leading strand, respectively. In the primase complex, both subunits are necessary for the initial di-nucleotide formation, but the extension of the primer depends only on the catalytic subunit. Can add both ribo- and deoxynucleotides during elongation of the primers. Synthesizes 9-mer RNA primers (also known as the 'unit length' RNA primers). Incorporates only ribonucleotides in the presence of ribo- and deoxy-nucleotide triphosphates (rNTPs, dNTPs). Requires template thymine or cytidine to start the RNA primer synthesis, with an adenine or guanine at its 5'-end. Binds single stranded DNA. The polypeptide is DNA primase small subunit (Prim1) (Mus musculus (Mouse)).